A 332-amino-acid chain; its full sequence is Ketol-acid reductoisomerase (NADP(+)) (332 aa).

The 181-residue stretch at 2 to 182 folds into the KARI N-terminal Rossmann domain; that stretch reads AKVYIDKDAS…GATRAGVIET (181 aa). Residues 25-28, Ser-53, and 83-86 each bind NADP(+); these read YGSQ and DMVQ. Residue His-108 is part of the active site. Gly-134 provides a ligand contact to NADP(+). Residues 183-328 form the KARI C-terminal knotted domain; it reads TFKEETETDL…RQIREISLRG (146 aa). The Mg(2+) site is built by Asp-191, Glu-195, Glu-227, and Glu-231. Ser-252 lines the substrate pocket.

This sequence belongs to the ketol-acid reductoisomerase family. It depends on Mg(2+) as a cofactor.

It catalyses the reaction (2R)-2,3-dihydroxy-3-methylbutanoate + NADP(+) = (2S)-2-acetolactate + NADPH + H(+). The enzyme catalyses (2R,3R)-2,3-dihydroxy-3-methylpentanoate + NADP(+) = (S)-2-ethyl-2-hydroxy-3-oxobutanoate + NADPH + H(+). Its pathway is amino-acid biosynthesis; L-isoleucine biosynthesis; L-isoleucine from 2-oxobutanoate: step 2/4. It participates in amino-acid biosynthesis; L-valine biosynthesis; L-valine from pyruvate: step 2/4. In terms of biological role, involved in the biosynthesis of branched-chain amino acids (BCAA). Catalyzes an alkyl-migration followed by a ketol-acid reduction of (S)-2-acetolactate (S2AL) to yield (R)-2,3-dihydroxy-isovalerate. In the isomerase reaction, S2AL is rearranged via a Mg-dependent methyl migration to produce 3-hydroxy-3-methyl-2-ketobutyrate (HMKB). In the reductase reaction, this 2-ketoacid undergoes a metal-dependent reduction by NADPH to yield (R)-2,3-dihydroxy-isovalerate. The protein is Ketol-acid reductoisomerase (NADP(+)) of Sulfurisphaera tokodaii (strain DSM 16993 / JCM 10545 / NBRC 100140 / 7) (Sulfolobus tokodaii).